We begin with the raw amino-acid sequence, 361 residues long: Chorismate synthase (361 aa).

NADP(+) is bound by residues Arg-48 and Arg-54. FMN contacts are provided by residues 125–127, 238–239, Gly-278, 293–297, and Arg-319; these read RSS, NA, and KPTSS.

The protein belongs to the chorismate synthase family. As to quaternary structure, homotetramer. FMNH2 serves as cofactor.

It carries out the reaction 5-O-(1-carboxyvinyl)-3-phosphoshikimate = chorismate + phosphate. The protein operates within metabolic intermediate biosynthesis; chorismate biosynthesis; chorismate from D-erythrose 4-phosphate and phosphoenolpyruvate: step 7/7. In terms of biological role, catalyzes the anti-1,4-elimination of the C-3 phosphate and the C-6 proR hydrogen from 5-enolpyruvylshikimate-3-phosphate (EPSP) to yield chorismate, which is the branch point compound that serves as the starting substrate for the three terminal pathways of aromatic amino acid biosynthesis. This reaction introduces a second double bond into the aromatic ring system. In Shigella flexneri serotype 5b (strain 8401), this protein is Chorismate synthase.